Reading from the N-terminus, the 478-residue chain is Proline--tRNA ligase (478 aa).

This sequence belongs to the class-II aminoacyl-tRNA synthetase family. ProS type 3 subfamily. As to quaternary structure, homodimer.

It localises to the cytoplasm. The enzyme catalyses tRNA(Pro) + L-proline + ATP = L-prolyl-tRNA(Pro) + AMP + diphosphate. Its function is as follows. Catalyzes the attachment of proline to tRNA(Pro) in a two-step reaction: proline is first activated by ATP to form Pro-AMP and then transferred to the acceptor end of tRNA(Pro). This chain is Proline--tRNA ligase, found in Clostridium botulinum (strain Kyoto / Type A2).